The sequence spans 129 residues: Iron-sulfur cluster assembly 1 homolog, mitochondrial (129 aa).

A mitochondrion-targeting transit peptide spans 1-12 (MASSVVRATVRA). 3 residues coordinate Fe cation: cysteine 57, cysteine 121, and cysteine 123.

It belongs to the HesB/IscA family.

The protein resides in the mitochondrion. Its function is as follows. Involved in the maturation of mitochondrial 4Fe-4S proteins functioning late in the iron-sulfur cluster assembly pathway. Probably involved in the binding of an intermediate of Fe/S cluster assembly. This is Iron-sulfur cluster assembly 1 homolog, mitochondrial (ISCA1) from Gallus gallus (Chicken).